The chain runs to 376 residues: MAINVSTNVSAMTAQRYLNNAADGTQKSMERLSSGYKINSARDDAAGLQISNRLTSQSRGLDMAVRNANDGISIAQTAEGAMNETTNILQRMRDLSLQSANGSNSSSERQAIQEEVSALNDELNRIAETTSFGGNKLLNGSFGNKSFQIGADSGEAVMLSMSDMRSDTKAMGGKSYVATNGKAPDWSVTNATDLTLSYTDKQGEAREVTINAKAGDDLEEVATYINGQNGDIKASVGDEGKLQLFAANQKVSSDVTIGGGLGTEIGFAAGKDVTVKDINVTTVGGSQEAVALIDGALKAVDSQRASLGAFQNRFGHAISNLDNINENVNASRSRIKDTDYARETTQMTKSQILQQASTSVLAQAKQSPSAALSLLG.

Positions 103–130 (SNSSSERQAIQEEVSALNDELNRIAETT) form a coiled coil.

It belongs to the bacterial flagellin family. As to quaternary structure, heteromer of multiple flagellin subunits including FlaA, FlaB, FlaC, FlaD and possibly FlaE.

The protein localises to the secreted. It localises to the bacterial flagellum. Flagellin is the subunit protein which polymerizes to form the filaments of bacterial flagella. FlaB is not essential for flagellar synthesis and motility. The polypeptide is Flagellin B (flaB) (Vibrio anguillarum (Listonella anguillarum)).